The primary structure comprises 414 residues: Gamma-glutamyl phosphate reductase (414 aa).

Belongs to the gamma-glutamyl phosphate reductase family.

The protein resides in the cytoplasm. It catalyses the reaction L-glutamate 5-semialdehyde + phosphate + NADP(+) = L-glutamyl 5-phosphate + NADPH + H(+). It functions in the pathway amino-acid biosynthesis; L-proline biosynthesis; L-glutamate 5-semialdehyde from L-glutamate: step 2/2. Its function is as follows. Catalyzes the NADPH-dependent reduction of L-glutamate 5-phosphate into L-glutamate 5-semialdehyde and phosphate. The product spontaneously undergoes cyclization to form 1-pyrroline-5-carboxylate. This is Gamma-glutamyl phosphate reductase from Xanthomonas campestris pv. campestris (strain ATCC 33913 / DSM 3586 / NCPPB 528 / LMG 568 / P 25).